We begin with the raw amino-acid sequence, 149 residues long: Calmodulin-like protein 3 (149 aa).

4 EF-hand domains span residues 8–43 (EQIA…LGQN), 44–79 (PTEA…KMKD), 81–116 (DSEE…LGEK), and 117–149 (LSDE…LVSK). Ca(2+) contacts are provided by D21, D23, D25, C27, E32, D57, D59, N61, T63, E68, D94, D96, N98, E105, D130, D132, D134, Q136, and E141.

This sequence belongs to the calmodulin family. In terms of assembly, interacts with MYO10, the interaction is calcium-dependent and essential for MYO10 function in filopodial extension.

Functionally, may function as a specific light chain of unconventional myosin-10 (MYO10), also enhances MYO10 translation, possibly by acting as a chaperone for the emerging MYO10 heavy chain protein. May compete with calmodulin by binding, with different affinities, to cellular substrates. The sequence is that of Calmodulin-like protein 3 (Calml3) from Rattus norvegicus (Rat).